We begin with the raw amino-acid sequence, 418 residues long: Delta(14)-sterol reductase TM7SF2 (418 aa).

6 consecutive transmembrane segments (helical) span residues 13-35 (FGGPLGAAALMLLLPVTMFHLLL), 62-81 (ALLLCLTWLGLQAALYLLPA), 102-124 (GFQALVLTALLVGLGVSAGLPLS), 129-148 (MLLPLAFAATLTAFIFSLLL), 255-277 (FGFMLAFGDLAWVPFTYSLQAQF), and 287-304 (WPLASFICLINAVGYYIF). Residues Lys-311, Arg-315, Leu-338, Trp-343, and 350 to 351 (NY) each bind NADP(+). A helical transmembrane segment spans residues 355 to 377 (LIMALAWSLPCGVFHLLPYFYFL). Residues Asp-390, 394–398 (CRQKY), and Tyr-405 each bind NADP(+).

This sequence belongs to the ERG4/ERG24 family. In terms of tissue distribution, highly expressed in liver and brain.

The protein resides in the microsome membrane. The protein localises to the endoplasmic reticulum membrane. The enzyme catalyses 4,4-dimethyl-5alpha-cholesta-8,24-dien-3beta-ol + NADP(+) = 4,4-dimethyl-5alpha-cholesta-8,14,24-trien-3beta-ol + NADPH + H(+). It carries out the reaction 5alpha-cholest-8,14-dien-3beta-ol + NADPH + H(+) = 5alpha-cholest-8-en-3beta-ol + NADP(+). The catalysed reaction is 4,4-dimethyl-8,14-cholestadien-3beta-ol + NADPH + H(+) = 4,4-dimethyl-5alpha-cholest-8-en-3beta-ol + NADP(+). Its pathway is steroid biosynthesis; cholesterol biosynthesis. In terms of biological role, catalyzes the reduction of the C14-unsaturated bond of lanosterol, as part of the metabolic pathway leading to cholesterol biosynthesis. The sequence is that of Delta(14)-sterol reductase TM7SF2 (TM7SF2) from Bos taurus (Bovine).